A 260-amino-acid chain; its full sequence is RxLR effector protein BLR38 (260 aa).

Positions 1-18 (MHCTVFFLLIACAKSSYG) are cleaved as a signal peptide. The RxLR signature appears at 46 to 49 (RLLR). The Nuclear localuization signal (NLS) motif lies at 136–148 (MPSSRKRPRALDE).

It belongs to the RxLR effector family.

It is found in the secreted. Its subcellular location is the host nucleus. Functionally, secreted effector that triggers a robust hypersensitive response (HR) in Lactuca serriola LS102. The response to BLN06 was visible as strong necrosis. Although effector recognition is frequently associated with single dominant R gene loci, the recognition of BLR38 requires 2 unlinked loci that display incomplete dominance. The protein is RxLR effector protein BLR38 of Bremia lactucae (Lettuce downy mildew).